Consider the following 801-residue polypeptide: Squamosa promoter-binding-like protein 7 (801 aa).

2 disordered regions span residues 1–23 and 59–91; these read MSSL…LVND and SPPL…DRVR. The SBP-type; atypical zinc-finger motif lies at 135–212; it reads VARCQVPDCE…ERHNNRRKRK (78 aa). Residues cysteine 138, cysteine 143, cysteine 160, cysteine 163, cysteine 179, cysteine 182, histidine 186, and cysteine 198 each coordinate Zn(2+). Residues 195-211 carry the Bipartite nuclear localization signal motif; the sequence is KRSCRRKLERHNNRRKR. The segment covering 203–213 has biased composition (basic residues); the sequence is ERHNNRRKRKP. 2 disordered regions span residues 203 to 258 and 286 to 313; these read ERHN…PSLI and GSGE…NKSA. Residues 222 to 233 show a composition bias toward polar residues; sequence EQQQVLSQNDNS. Basic and acidic residues predominate over residues 249–258; sequence QRAEEEPSLI. Positions 304–313 are enriched in polar residues; the sequence is SPSNGDNKSA.

As to quaternary structure, homodimer. Interacts with KIN17. Interacts with HY5. The cofactor is Zn(2+). Expressed in roots rosette leaves, cauline leaves, stems, flowers and siliques.

The protein resides in the nucleus speckle. Transcription factor that participates in reprogramming global gene expression during copper deficiency in order to improve the metal uptake and prioritize its distribution to copper proteins of major importance. Binds directly to 5'-GTAC-3' motifs in the microRNA (miRNA) promoter of the stress-responsive miRNAs miR398b and miR398c to activate their transcription. During copper deficiency, activates the copper transporters COPT1 and COPT2, and the copper chaperone CCH, directly or indirectly via miRNAs. Required for the expression of the miRNAs miR397, miR408 and miR857. Acts coordinately with HY5 to regulate miR408 and its target genes in response to changes in light and copper conditions. Activates miR857 and its target genes in response to low copper conditions. Involved in cadmium stress response by regulating miR397a, miR398b, miR398c and miR857. Required for iron homeostasis during copper deficiency. The protein is Squamosa promoter-binding-like protein 7 (SPL7) of Arabidopsis thaliana (Mouse-ear cress).